A 210-amino-acid chain; its full sequence is Urease accessory protein UreF (210 aa).

It belongs to the UreF family. UreD, UreF and UreG form a complex that acts as a GTP-hydrolysis-dependent molecular chaperone, activating the urease apoprotein by helping to assemble the nickel containing metallocenter of UreC. The UreE protein probably delivers the nickel.

It is found in the cytoplasm. In terms of biological role, required for maturation of urease via the functional incorporation of the urease nickel metallocenter. This chain is Urease accessory protein UreF, found in Cereibacter sphaeroides (strain ATCC 17029 / ATH 2.4.9) (Rhodobacter sphaeroides).